Reading from the N-terminus, the 194-residue chain is Imidazoleglycerol-phosphate dehydratase (194 aa).

This sequence belongs to the imidazoleglycerol-phosphate dehydratase family.

The protein resides in the cytoplasm. The catalysed reaction is D-erythro-1-(imidazol-4-yl)glycerol 3-phosphate = 3-(imidazol-4-yl)-2-oxopropyl phosphate + H2O. Its pathway is amino-acid biosynthesis; L-histidine biosynthesis; L-histidine from 5-phospho-alpha-D-ribose 1-diphosphate: step 6/9. The protein is Imidazoleglycerol-phosphate dehydratase of Streptococcus gordonii (strain Challis / ATCC 35105 / BCRC 15272 / CH1 / DL1 / V288).